The sequence spans 505 residues: Aspartyl/glutamyl-tRNA(Asn/Gln) amidotransferase subunit B (505 aa).

It belongs to the GatB/GatE family. GatB subfamily. Heterotrimer of A, B and C subunits.

The enzyme catalyses L-glutamyl-tRNA(Gln) + L-glutamine + ATP + H2O = L-glutaminyl-tRNA(Gln) + L-glutamate + ADP + phosphate + H(+). It carries out the reaction L-aspartyl-tRNA(Asn) + L-glutamine + ATP + H2O = L-asparaginyl-tRNA(Asn) + L-glutamate + ADP + phosphate + 2 H(+). Its function is as follows. Allows the formation of correctly charged Asn-tRNA(Asn) or Gln-tRNA(Gln) through the transamidation of misacylated Asp-tRNA(Asn) or Glu-tRNA(Gln) in organisms which lack either or both of asparaginyl-tRNA or glutaminyl-tRNA synthetases. The reaction takes place in the presence of glutamine and ATP through an activated phospho-Asp-tRNA(Asn) or phospho-Glu-tRNA(Gln). This chain is Aspartyl/glutamyl-tRNA(Asn/Gln) amidotransferase subunit B, found in Kineococcus radiotolerans (strain ATCC BAA-149 / DSM 14245 / SRS30216).